Consider the following 248-residue polypeptide: 2,3-bisphosphoglycerate-dependent phosphoglycerate mutase (248 aa).

Substrate is bound by residues 8 to 15 (RHGESTWN), 21 to 22 (TG), R60, 87 to 90 (ERHY), K98, and 114 to 115 (RR). H9 acts as the Tele-phosphohistidine intermediate in catalysis. Residue E87 is the Proton donor/acceptor of the active site. The disordered stretch occupies residues 118–137 (DTPPPALEPTDPRASYDDPR). The span at 127–137 (TDPRASYDDPR) shows a compositional bias: basic and acidic residues. Position 183-184 (183-184 (GN)) interacts with substrate.

Belongs to the phosphoglycerate mutase family. BPG-dependent PGAM subfamily. In terms of assembly, homodimer.

The catalysed reaction is (2R)-2-phosphoglycerate = (2R)-3-phosphoglycerate. The protein operates within carbohydrate degradation; glycolysis; pyruvate from D-glyceraldehyde 3-phosphate: step 3/5. Catalyzes the interconversion of 2-phosphoglycerate and 3-phosphoglycerate. The polypeptide is 2,3-bisphosphoglycerate-dependent phosphoglycerate mutase (Cupriavidus necator (strain ATCC 17699 / DSM 428 / KCTC 22496 / NCIMB 10442 / H16 / Stanier 337) (Ralstonia eutropha)).